The chain runs to 482 residues: E3 ubiquitin-protein ligase makorin-1 (482 aa).

Residues 26 to 38 show a composition bias toward low complexity; the sequence is ASPTPIPTVTAPS. A disordered region spans residues 26 to 52; the sequence is ASPTPIPTVTAPSLGAGGGGGGSDGSG. The segment covering 40-52 has biased composition (gly residues); that stretch reads GAGGGGGGSDGSG. 3 C3H1-type zinc fingers span residues 55 to 82, 84 to 111, and 208 to 235; these read WTKQ…HDLS, SPYS…HSKP, and ETKK…HGDS. Residues 236–263 are makorin-type Cys-His; the sequence is CDMCGLQVLHPMDAAQRSQHIKSCIEAH. The RING-type zinc-finger motif lies at 281-335; it reads CGICMEVVYEKANPSERRFGILSNCNHTYCLKCIRKWRSAKQFESKIIKSCPECR. The C3H1-type 4 zinc finger occupies 364-393; it reads AMSNKACRYFDEGRGSCPFGGNCFYKHAYP.

Interacts with p53/TP53 and CDKN1A. Interacts with TERT, modulating telomere length homeostasis. Post-translationally, auto-ubiquitinated; which leads to proteasomal degradation. Ubiquitous.

It catalyses the reaction S-ubiquitinyl-[E2 ubiquitin-conjugating enzyme]-L-cysteine + [acceptor protein]-L-lysine = [E2 ubiquitin-conjugating enzyme]-L-cysteine + N(6)-ubiquitinyl-[acceptor protein]-L-lysine.. Its pathway is protein modification; protein ubiquitination. Functionally, E3 ubiquitin ligase catalyzing the covalent attachment of ubiquitin moieties onto substrate proteins. These substrates include FILIP1, p53/TP53, CDKN1A and TERT. Keeps cells alive by suppressing p53/TP53 under normal conditions, but stimulates apoptosis by repressing CDKN1A under stress conditions. Acts as a negative regulator of telomerase. Has negative and positive effects on RNA polymerase II-dependent transcription. The chain is E3 ubiquitin-protein ligase makorin-1 (MKRN1) from Homo sapiens (Human).